A 33-amino-acid chain; its full sequence is Sucrose-6-phosphate hydrolase (33 aa).

Residue 15–18 (PLQE) participates in substrate binding. Glu-18 is a catalytic residue.

Belongs to the glycosyl hydrolase 32 family.

It carries out the reaction Hydrolysis of terminal non-reducing beta-D-fructofuranoside residues in beta-D-fructofuranosides.. It participates in glycan biosynthesis; sucrose metabolism. The protein is Sucrose-6-phosphate hydrolase of Fusobacterium mortiferum.